The chain runs to 240 residues: MSQILQHDAALVLFSGGQDSATCLAWTLSRFARVETLGFDYGQRHAVELDCRDRLIDGLKQIHPDWANKLGDAHTLSIPTLATISDTALTRDVAIAMGADGLPNTFVPGRNLLFLTFAAALAYRRGIGGLVGGMCETDYSGYPDCRDATLKALTTALNLGMATDFELHTPLMWRDKAATWALAQDLGGDALVDLIREHSHTCYLGERGARHDWGYGCGECPACQLRAKGWREYREAGTAT.

14–24 provides a ligand contact to ATP; sequence FSGGQDSATCL. Cys202, Cys217, Cys220, and Cys223 together coordinate Zn(2+).

Belongs to the QueC family. Zn(2+) serves as cofactor.

The enzyme catalyses 7-carboxy-7-deazaguanine + NH4(+) + ATP = 7-cyano-7-deazaguanine + ADP + phosphate + H2O + H(+). It functions in the pathway purine metabolism; 7-cyano-7-deazaguanine biosynthesis. In terms of biological role, catalyzes the ATP-dependent conversion of 7-carboxy-7-deazaguanine (CDG) to 7-cyano-7-deazaguanine (preQ(0)). The sequence is that of 7-cyano-7-deazaguanine synthase from Rhodopseudomonas palustris (strain BisB18).